We begin with the raw amino-acid sequence, 467 residues long: Chromosomal replication initiator protein DnaA (467 aa).

The domain I, interacts with DnaA modulators stretch occupies residues 1–85 (MTTTLWPQVL…LEVGEYAIES (85 aa)). Residues 85 to 130 (SFNEPENTSVPQPLRETKAEREAAEKAASSTSKKKSDSPPKKTIKH) form a domain II region. The interval 87-129 (NEPENTSVPQPLRETKAEREAAEKAASSTSKKKSDSPPKKTIK) is disordered. Basic and acidic residues predominate over residues 99-109 (RETKAEREAAE). Positions 131-347 (NLNTNFTFDT…GALKRVGAFA (217 aa)) are domain III, AAA+ region. ATP-binding residues include glycine 175, glycine 177, lysine 178, and threonine 179. The domain IV, binds dsDNA stretch occupies residues 348–467 (QFTQQLVTVD…FNSLIRIITN (120 aa)).

This sequence belongs to the DnaA family. In terms of assembly, oligomerizes as a right-handed, spiral filament on DNA at oriC.

The protein resides in the cytoplasm. Its function is as follows. Plays an essential role in the initiation and regulation of chromosomal replication. ATP-DnaA binds to the origin of replication (oriC) to initiate formation of the DNA replication initiation complex once per cell cycle. Binds the DnaA box (a 9 base pair repeat at the origin) and separates the double-stranded (ds)DNA. Forms a right-handed helical filament on oriC DNA; dsDNA binds to the exterior of the filament while single-stranded (ss)DNA is stabiized in the filament's interior. The ATP-DnaA-oriC complex binds and stabilizes one strand of the AT-rich DNA unwinding element (DUE), permitting loading of DNA polymerase. After initiation quickly degrades to an ADP-DnaA complex that is not apt for DNA replication. Binds acidic phospholipids. The protein is Chromosomal replication initiator protein DnaA of Hydrogenovibrio crunogenus (strain DSM 25203 / XCL-2) (Thiomicrospira crunogena).